A 660-amino-acid polypeptide reads, in one-letter code: DNA mismatch repair protein MutL (660 aa).

This sequence belongs to the DNA mismatch repair MutL/HexB family.

In terms of biological role, this protein is involved in the repair of mismatches in DNA. It is required for dam-dependent methyl-directed DNA mismatch repair. May act as a 'molecular matchmaker', a protein that promotes the formation of a stable complex between two or more DNA-binding proteins in an ATP-dependent manner without itself being part of a final effector complex. The polypeptide is DNA mismatch repair protein MutL (Streptococcus equi subsp. zooepidemicus (strain MGCS10565)).